The primary structure comprises 272 residues: Putative phosphatase HI_0597 (272 aa).

The active-site Nucleophile is Asp11. Asp11 contacts Mg(2+). Position 12 (Leu12) interacts with phosphate. Asp13 contacts Mg(2+). Residues 45–46 and Lys195 each bind phosphate; that span reads TG. Mg(2+) is bound at residue Asp218. A phosphate-binding site is contributed by Asn221.

Belongs to the HAD-like hydrolase superfamily. Cof family. The cofactor is Mg(2+).

The protein is Putative phosphatase HI_0597 of Haemophilus influenzae (strain ATCC 51907 / DSM 11121 / KW20 / Rd).